The chain runs to 256 residues: Phosphatidylglycerol--prolipoprotein diacylglyceryl transferase (256 aa).

The next 3 helical transmembrane spans lie at 19–39 (VHWY…LGYW), 56–76 (LIFY…MLFY), and 91–111 (IWEG…AAWL). Arg-139 is an a 1,2-diacyl-sn-glycero-3-phospho-(1'-sn-glycerol) binding site. A helical transmembrane segment spans residues 231–251 (FGWLTMGQVLSIPMLLIGIWL).

The protein belongs to the Lgt family.

The protein localises to the cell inner membrane. The enzyme catalyses L-cysteinyl-[prolipoprotein] + a 1,2-diacyl-sn-glycero-3-phospho-(1'-sn-glycerol) = an S-1,2-diacyl-sn-glyceryl-L-cysteinyl-[prolipoprotein] + sn-glycerol 1-phosphate + H(+). Its pathway is protein modification; lipoprotein biosynthesis (diacylglyceryl transfer). In terms of biological role, catalyzes the transfer of the diacylglyceryl group from phosphatidylglycerol to the sulfhydryl group of the N-terminal cysteine of a prolipoprotein, the first step in the formation of mature lipoproteins. This chain is Phosphatidylglycerol--prolipoprotein diacylglyceryl transferase, found in Legionella pneumophila (strain Corby).